Consider the following 450-residue polypeptide: Exodeoxyribonuclease 7 large subunit (450 aa).

Belongs to the XseA family. As to quaternary structure, heterooligomer composed of large and small subunits.

Its subcellular location is the cytoplasm. The enzyme catalyses Exonucleolytic cleavage in either 5'- to 3'- or 3'- to 5'-direction to yield nucleoside 5'-phosphates.. Functionally, bidirectionally degrades single-stranded DNA into large acid-insoluble oligonucleotides, which are then degraded further into small acid-soluble oligonucleotides. The protein is Exodeoxyribonuclease 7 large subunit of Listeria monocytogenes serovar 1/2a (strain ATCC BAA-679 / EGD-e).